The chain runs to 25 residues: Bombinin-like peptide 4 (25 aa).

Phenylalanine 25 carries the phenylalanine amide modification.

This sequence belongs to the bombinin family. In terms of tissue distribution, expressed by the skin glands.

The protein resides in the secreted. Has antimicrobial activity, but no hemolytic activity. Preference on killing Gram-negative non-enteric bacteria. This chain is Bombinin-like peptide 4, found in Bombina orientalis (Oriental fire-bellied toad).